Here is a 312-residue protein sequence, read N- to C-terminus: Regulation of nuclear pre-mRNA domain-containing protein 1A (312 aa).

At S2 the chain carries N-acetylserine. One can recognise a CID domain in the interval 2–133 (SAFSEAALEK…QLKHALYGDK (132 aa)). S153, S156, and S285 each carry phosphoserine. Positions 244–286 (LADFLRCQKEALAEKEHKLEEYKRKLARVSLVRKELRARIQSL) form a coiled coil.

It belongs to the UPF0400 (RTT103) family. May form a heterodimer with RPRD1B. Associates with the RNA polymerase II subunit POLR2A (via CTD phosphorylated at 'Ser-2' and 'Ser-7' of the heptad repeats).

It localises to the nucleus. Its function is as follows. Interacts with phosphorylated C-terminal heptapeptide repeat domain (CTD) of the largest RNA polymerase II subunit POLR2A, and participates in dephosphorylation of the CTD by RPAP2. May act as a negative regulator of cyclin-D1 (CCND1) and cyclin-E (CCNE1) in the cell cycle. The polypeptide is Regulation of nuclear pre-mRNA domain-containing protein 1A (Rprd1a) (Mus musculus (Mouse)).